Consider the following 183-residue polypeptide: uncharacterized protein (183 aa).

It belongs to the EUO family.

This is an uncharacterized protein from Chlamydia trachomatis serovar D (strain ATCC VR-885 / DSM 19411 / UW-3/Cx).